A 715-amino-acid polypeptide reads, in one-letter code: DNA mismatch repair protein MLH3 (715 aa).

It belongs to the DNA mismatch repair MutL/HexB family. As to quaternary structure, heterodimer of MLH1 and MLH3, called MutLbeta, which is involved in correction of a specific subset of IDLs when associated with MutSbeta. Forms a ternary complex with a SGS1-TOP3 heterodimer during meiosis.

The protein localises to the nucleus. Involved in DNA mismatch repair (MMR), correcting insertion-deletion loops (IDLs) resulting from DNA replication, DNA damage or from recombination events between non-identical sequences during meiosis. Component of the MutLbeta heterodimer, which probably forms a ternary complex with the MutSbeta heterodimer that initially recognizes the DNA mismatches. This complex is thought to be responsible for directing the downstream MMR events, including strand discrimination, excision, and resynthesis. Plays a major role in promoting meiotic crossing-over and is involved in maintaining the genetic stability of simple sequence repeats by correction of frameshift intermediates. The polypeptide is DNA mismatch repair protein MLH3 (MLH3) (Saccharomyces cerevisiae (strain ATCC 204508 / S288c) (Baker's yeast)).